The following is a 497-amino-acid chain: Hexokinase-1 (497 aa).

The helical transmembrane segment at alanine 4–valine 24 threads the bilayer. In terms of domain architecture, Hexokinase spans alanine 35–alanine 487. The segment at threonine 90 to valine 228 is hexokinase small subdomain. Glycine 104, threonine 105, and asparagine 106 together coordinate ADP. The D-glucose site is built by threonine 194, lysine 195, asparagine 229, and aspartate 230. The hexokinase large subdomain stretch occupies residues asparagine 229 to aspartate 476. ADP is bound at residue threonine 253. Asparagine 256, glutamate 284, and glutamate 315 together coordinate D-glucose. An ADP-binding site is contributed by glycine 441.

It belongs to the hexokinase family.

The protein localises to the plastid. The protein resides in the chloroplast outer membrane. It catalyses the reaction a D-hexose + ATP = a D-hexose 6-phosphate + ADP + H(+). The enzyme catalyses D-fructose + ATP = D-fructose 6-phosphate + ADP + H(+). The catalysed reaction is D-glucose + ATP = D-glucose 6-phosphate + ADP + H(+). It functions in the pathway carbohydrate metabolism; hexose metabolism. The protein operates within carbohydrate degradation; glycolysis; D-glyceraldehyde 3-phosphate and glycerone phosphate from D-glucose: step 1/4. Fructose and glucose phosphorylating enzyme. The polypeptide is Hexokinase-1 (HXK1) (Nicotiana tabacum (Common tobacco)).